Consider the following 388-residue polypeptide: Glutamate 5-kinase (388 aa).

K21 is a binding site for ATP. S61, D148, and N160 together coordinate substrate. ATP is bound by residues 180 to 181 (TD) and 222 to 228 (TGGMITK). In terms of domain architecture, PUA spans 285 to 363 (RGSVFLDPGA…RWLARELGAE (79 aa)).

This sequence belongs to the glutamate 5-kinase family.

The protein resides in the cytoplasm. The catalysed reaction is L-glutamate + ATP = L-glutamyl 5-phosphate + ADP. It functions in the pathway amino-acid biosynthesis; L-proline biosynthesis; L-glutamate 5-semialdehyde from L-glutamate: step 1/2. In terms of biological role, catalyzes the transfer of a phosphate group to glutamate to form L-glutamate 5-phosphate. This Thermobifida fusca (strain YX) protein is Glutamate 5-kinase.